Reading from the N-terminus, the 475-residue chain is Ribulose bisphosphate carboxylase large chain (475 aa).

Positions Met1–Ala2 are excised as a propeptide. An N-acetylproline modification is found at Pro3. Position 14 is an N6,N6,N6-trimethyllysine (Lys14). Positions 123 and 173 each coordinate substrate. Residue Lys175 is the Proton acceptor of the active site. Residue Lys177 participates in substrate binding. Lys201, Asp203, and Glu204 together coordinate Mg(2+). The residue at position 201 (Lys201) is an N6-carboxylysine. His294 functions as the Proton acceptor in the catalytic mechanism. Substrate contacts are provided by Arg295, His327, and Ser379.

Belongs to the RuBisCO large chain family. Type I subfamily. As to quaternary structure, heterohexadecamer of 8 large chains and 8 small chains; disulfide-linked. The disulfide link is formed within the large subunit homodimers. It depends on Mg(2+) as a cofactor. The disulfide bond which can form in the large chain dimeric partners within the hexadecamer appears to be associated with oxidative stress and protein turnover.

The protein resides in the plastid. The protein localises to the chloroplast. The catalysed reaction is 2 (2R)-3-phosphoglycerate + 2 H(+) = D-ribulose 1,5-bisphosphate + CO2 + H2O. It carries out the reaction D-ribulose 1,5-bisphosphate + O2 = 2-phosphoglycolate + (2R)-3-phosphoglycerate + 2 H(+). In terms of biological role, ruBisCO catalyzes two reactions: the carboxylation of D-ribulose 1,5-bisphosphate, the primary event in carbon dioxide fixation, as well as the oxidative fragmentation of the pentose substrate in the photorespiration process. Both reactions occur simultaneously and in competition at the same active site. The protein is Ribulose bisphosphate carboxylase large chain of Oedogonium cardiacum (Filamentous green alga).